The chain runs to 310 residues: Ribonuclease Z (310 aa).

H64, H66, D68, H69, H142, D213, and H271 together coordinate Zn(2+). The Proton acceptor role is filled by D68.

The protein belongs to the RNase Z family. As to quaternary structure, homodimer. The cofactor is Zn(2+).

The catalysed reaction is Endonucleolytic cleavage of RNA, removing extra 3' nucleotides from tRNA precursor, generating 3' termini of tRNAs. A 3'-hydroxy group is left at the tRNA terminus and a 5'-phosphoryl group is left at the trailer molecule.. Zinc phosphodiesterase, which displays some tRNA 3'-processing endonuclease activity. Probably involved in tRNA maturation, by removing a 3'-trailer from precursor tRNA. This is Ribonuclease Z from Treponema pallidum (strain Nichols).